Here is a 419-residue protein sequence, read N- to C-terminus: Glycine, glutamate and proline-rich protein (419 aa).

The signal sequence occupies residues 1-16 (MKCLVALFLSLSLVAC). The interval 74-152 (VERESEEAEG…VDMCAGESRR (79 aa)) is disordered. Residues 76-85 (RESEEAEGEG) show a composition bias toward acidic residues. Over residues 86 to 130 (TDGRGGGEGEREGWGGEREGGEGEREGGEGEREGREGEREGKSSE) the composition is skewed to basic and acidic residues.

It in the C-terminal section; belongs to the glycosyl hydrolase 23 family. In terms of tissue distribution, component of the acid-insoluble organic matrix of calcified layers of the shell (at protein level).

It is found in the secreted. This Lottia gigantea (Giant owl limpet) protein is Glycine, glutamate and proline-rich protein.